The primary structure comprises 95 residues: ATP-dependent Clp protease adapter protein ClpS (95 aa).

This sequence belongs to the ClpS family. In terms of assembly, binds to the N-terminal domain of the chaperone ClpA.

Its function is as follows. Involved in the modulation of the specificity of the ClpAP-mediated ATP-dependent protein degradation. This chain is ATP-dependent Clp protease adapter protein ClpS, found in Synechococcus elongatus (strain ATCC 33912 / PCC 7942 / FACHB-805) (Anacystis nidulans R2).